A 196-amino-acid chain; its full sequence is tRNA(Phe) 7-((3-amino-3-carboxypropyl)-4-demethylwyosine(37)-N(4))-methyltransferase 1 (196 aa).

This sequence belongs to the TYW3 family.

The catalysed reaction is 4-demethyl-7-[(3S)-3-amino-3-carboxypropyl]wyosine(37) in tRNA(Phe) + S-adenosyl-L-methionine = 7-[(3S)-3-amino-3-carboxypropyl]wyosine(37) in tRNA(Phe) + S-adenosyl-L-homocysteine + H(+). S-adenosyl-L-methionine-dependent methyltransferase that acts as a component of the wyosine derivatives biosynthesis pathway. Probably methylates N-4 position of wybutosine-86 to produce wybutosine-72. The sequence is that of tRNA(Phe) 7-((3-amino-3-carboxypropyl)-4-demethylwyosine(37)-N(4))-methyltransferase 1 from Pyrococcus furiosus (strain ATCC 43587 / DSM 3638 / JCM 8422 / Vc1).